The sequence spans 81 residues: Large ribosomal subunit protein bL31 (81 aa).

Belongs to the bacterial ribosomal protein bL31 family. Type A subfamily. Part of the 50S ribosomal subunit.

Binds the 23S rRNA. The polypeptide is Large ribosomal subunit protein bL31 (rpmE) (Fusobacterium nucleatum subsp. nucleatum (strain ATCC 25586 / DSM 15643 / BCRC 10681 / CIP 101130 / JCM 8532 / KCTC 2640 / LMG 13131 / VPI 4355)).